The chain runs to 270 residues: tRNA pseudouridine synthase A (270 aa).

The active-site Nucleophile is D51. Y109 contacts substrate.

This sequence belongs to the tRNA pseudouridine synthase TruA family. As to quaternary structure, homodimer.

The catalysed reaction is uridine(38/39/40) in tRNA = pseudouridine(38/39/40) in tRNA. Its function is as follows. Formation of pseudouridine at positions 38, 39 and 40 in the anticodon stem and loop of transfer RNAs. This chain is tRNA pseudouridine synthase A, found in Burkholderia orbicola (strain MC0-3).